Consider the following 749-residue polypeptide: 1,4-alpha-glucan branching enzyme GlgB (749 aa).

Residue Asp-427 is the Nucleophile of the active site. Residue Glu-480 is the Proton donor of the active site.

Belongs to the glycosyl hydrolase 13 family. GlgB subfamily. In terms of assembly, monomer.

The enzyme catalyses Transfers a segment of a (1-&gt;4)-alpha-D-glucan chain to a primary hydroxy group in a similar glucan chain.. The protein operates within glycan biosynthesis; glycogen biosynthesis. Its function is as follows. Catalyzes the formation of the alpha-1,6-glucosidic linkages in glycogen by scission of a 1,4-alpha-linked oligosaccharide from growing alpha-1,4-glucan chains and the subsequent attachment of the oligosaccharide to the alpha-1,6 position. This Thermobifida fusca (strain YX) protein is 1,4-alpha-glucan branching enzyme GlgB.